The chain runs to 995 residues: Polynucleotide 5'-hydroxyl-kinase NOL9 (995 aa).

Disordered regions lie at residues 18-173 and 271-359; these read EQRE…SSMK and IKVF…YEPP. Composition is skewed to low complexity over residues 75 to 94 and 110 to 129; these read TAGA…SSPS and VNKS…KSAK. Acidic residues predominate over residues 279 to 354; it reads EETDSDEDDI…DIFDTDDLDS (76 aa). 639–646 contributes to the ATP binding site; the sequence is GGKGVGKS.

This sequence belongs to the Clp1 family. NOL9/GRC3 subfamily.

Its subcellular location is the nucleus. It localises to the nucleolus. Functionally, polynucleotide 5'-kinase involved in rRNA processing. The chain is Polynucleotide 5'-hydroxyl-kinase NOL9 from Drosophila melanogaster (Fruit fly).